A 1238-amino-acid chain; its full sequence is Virulence sensor protein BvgS (1238 aa).

The N-terminal stretch at 1–32 (MPAPHRLYPRSLICLAQALLAWALLAWAPAQA) is a signal peptide. Topologically, residues 33–307 (SQELTLVGKA…REQQWMADHP (275 aa)) are cytoplasmic. The helical transmembrane segment at 308-331 (VVKVAVLNLFAPFTLFRTDEQFGG) threads the bilayer. Over 332–541 (ISAAVLQLLQ…PRTWYAYRNE (210 aa)) the chain is Periplasmic. Residues 542-563 (IYLLIGLGLLSALLFLSWIVYL) form a helical membrane-spanning segment. The Cytoplasmic portion of the chain corresponds to 564–1238 (RRQIRQRKRA…LEQRPHQDQP (675 aa)). Residues 580–651 (QLEFMRVLID…MHEFLLTRVA (72 aa)) enclose the PAS domain. One can recognise a PAC domain in the interval 652 to 708 (AEREPRFEDRDVTLHGRTRHVYQWTIPYGDSLGELKGIIGGWIDITERAELLRKLHD). The 223-residue stretch at 726-948 (TMSHEIRTPM…TVSVDLRLTM (223 aa)) folds into the Histidine kinase domain. The residue at position 729 (histidine 729) is a Phosphohistidine; by autocatalysis. A Response regulatory domain is found at 974–1095 (RVLVVDDHKP…ALRQRLNEAV (122 aa)). Aspartate 1023 bears the 4-aspartylphosphate mark. In terms of domain architecture, HPt spans 1133 to 1228 (DEALIRQLLE…AALETQLRAW (96 aa)). Phosphohistidine is present on histidine 1172.

Post-translationally, activation requires a sequential transfer of a phosphate group from a His in the primary transmitter domain, to an Asp in the receiver domain and to a His in the secondary transmitter domain.

It is found in the cell inner membrane. The enzyme catalyses ATP + protein L-histidine = ADP + protein N-phospho-L-histidine.. Member of the two-component regulatory system BvgS/BvgA. Phosphorylates BvgA via a four-step phosphorelay in response to environmental signals. The polypeptide is Virulence sensor protein BvgS (bvgS) (Bordetella pertussis (strain Tohama I / ATCC BAA-589 / NCTC 13251)).